The sequence spans 339 residues: Glycerol-3-phosphate dehydrogenase [NAD(P)+] (339 aa).

The NADPH site is built by serine 15, tyrosine 16, histidine 36, and lysine 110. Sn-glycerol 3-phosphate is bound by residues lysine 110, glycine 139, and threonine 141. Alanine 143 contacts NADPH. 5 residues coordinate sn-glycerol 3-phosphate: lysine 195, aspartate 248, serine 258, arginine 259, and asparagine 260. Lysine 195 acts as the Proton acceptor in catalysis. Arginine 259 contributes to the NADPH binding site. The NADPH site is built by valine 283 and glutamate 285.

This sequence belongs to the NAD-dependent glycerol-3-phosphate dehydrogenase family.

The protein localises to the cytoplasm. It carries out the reaction sn-glycerol 3-phosphate + NAD(+) = dihydroxyacetone phosphate + NADH + H(+). It catalyses the reaction sn-glycerol 3-phosphate + NADP(+) = dihydroxyacetone phosphate + NADPH + H(+). Its pathway is membrane lipid metabolism; glycerophospholipid metabolism. Catalyzes the reduction of the glycolytic intermediate dihydroxyacetone phosphate (DHAP) to sn-glycerol 3-phosphate (G3P), the key precursor for phospholipid synthesis. This chain is Glycerol-3-phosphate dehydrogenase [NAD(P)+], found in Shigella flexneri serotype 5b (strain 8401).